We begin with the raw amino-acid sequence, 550 residues long: Hydroxylamine reductase (550 aa).

4 residues coordinate [2Fe-2S] cluster: Cys-3, Cys-6, Cys-18, and Cys-25. Hybrid [4Fe-2O-2S] cluster contacts are provided by His-249, Glu-273, Cys-317, Cys-405, Cys-433, Cys-458, Glu-492, and Lys-494. Cys-405 carries the cysteine persulfide modification.

Belongs to the HCP family. It depends on [2Fe-2S] cluster as a cofactor. The cofactor is hybrid [4Fe-2O-2S] cluster.

The protein localises to the cytoplasm. It catalyses the reaction A + NH4(+) + H2O = hydroxylamine + AH2 + H(+). In terms of biological role, catalyzes the reduction of hydroxylamine to form NH(3) and H(2)O. The polypeptide is Hydroxylamine reductase (Salmonella gallinarum (strain 287/91 / NCTC 13346)).